Here is a 605-residue protein sequence, read N- to C-terminus: Microtubule-associated protein VP10 (605 aa).

Interacts with VP1.

Its subcellular location is the virion. The protein localises to the host cytoplasm. The protein resides in the host cytoskeleton. In terms of biological role, minor inner capsid component. Displays NTPase and RNA 5'-triphosphatase (RTPase) activities. May function as a cofactor of polymerase VP1. Associates with microtubules and plays a role in the formation, structural organization and morphology of viral inclusions, where the assembly of cores and the replication of viral RNA occur. The sequence is that of Microtubule-associated protein VP10 from Colorado tick fever virus (strain USA/Florio N-7180) (CTFV).